The chain runs to 364 residues: Trans-enoyl reductase ccsC (364 aa).

52 to 55 (CDYK) is an NADP(+) binding site. Position 141 to 148 (141 to 148 (TGLATLGM)) interacts with substrate. Residues 176 to 179 (SSSV), 199 to 202 (SPRN), Tyr217, and 264 to 265 (LE) each bind NADP(+). 284–288 (GPALL) provides a ligand contact to substrate. NADP(+) is bound at residue 353–354 (VS).

The protein belongs to the zinc-containing alcohol dehydrogenase family. As to quaternary structure, monomer.

It participates in mycotoxin biosynthesis. In terms of biological role, trans-enoyl reductase; part of the gene cluster that mediates the biosynthesis of a family of the mycotoxins cytochalasins E and K. The hybrid PKS-NRPS synthetase ccsA and the enoyl reductase ccsC are responsible for fusion of phenylalanine with an octaketide backbone and subsequent release of the stable tetramic acid precursor. The polyketide synthase module (PKS) of the PKS-NRPS ccsA is responsible for the synthesis of the octaketide backbone. The downstream nonribosomal peptide synthetase (NRPS) amidates the carboxyl end of the octaketide with a phenylalanine. A reductase-like domain (R) at the C-terminus catalyzes the reductive release of the polyketide-amino acid intermediate. Because ccsA lacks a designated enoylreductase (ER) domain, the required activity is provided the enoyl reductase ccsC. Upon formation of the 11-membered carbocycle-fused perhydroisoindolone intermediate, a number of oxidative steps are required to afford the final cytochalasin E and K, including two hydroxylations at C17 and C18, one alcohol oxidation at C17, one epoxidation at C6 and C7 and two Baeyer-Villiger oxidations. The oxidative modification at C17, C18 and the C6-C7 epoxidation are likely to be catalyzed by the two cytochrome P450 oxygenases ccsD and ccsG. CcsD may be responsible for the epoxidation of the C6-C7 double bond. CcsG may be responsible for the successive oxidative modifications at C17 and C18. The double Baeyer-Villiger oxidations of ketocytochalasin to precytochalasin and cytochalasin Z(16) are among the final steps leading to cytochalasin E and K and are catalyzed by ccsB. The first oxygen insertion step follows that of the classic BVMO mechanism, generating the ester precytochalasin. Release of precytochalasin into an aqueous environment can generate the shunt product iso-precytochalasin through spontaneous isomerization. Alternatively, precytochalasin can undergo further oxidation by ccsB to yield the in-line carbonate-containing cytochalasin Z(16). Cytochalasin Z(16) is a precursor to cytochalasin E and cytochalasin K, whereas iso-precytochalasin is a precursor to cytochalasin Z(17) and rosellichalasin. The hydrolyase ccsE may catalyze hydrolysis of epoxide bond in cytochalasin E to afford cytochalasin K. The function of ccsF has not been assigned but it may play a role in post-PKS-NRPS biosynthetic step, resistance or transport of cytochalasins and related PKS-NRPS products. The sequence is that of Trans-enoyl reductase ccsC from Aspergillus clavatus (strain ATCC 1007 / CBS 513.65 / DSM 816 / NCTC 3887 / NRRL 1 / QM 1276 / 107).